We begin with the raw amino-acid sequence, 182 residues long: RNA chaperone ProQ (182 aa).

The segment at 125–160 is disordered; that stretch reads EQRKEQRKDFFKKKAREERNAKTMNKAVKKGSPKKD.

Belongs to the ProQ family.

The protein localises to the cytoplasm. In terms of biological role, RNA chaperone with significant RNA binding, RNA strand exchange and RNA duplexing activities. This is RNA chaperone ProQ from Haemophilus ducreyi (strain 35000HP / ATCC 700724).